A 184-amino-acid chain; its full sequence is Secreted protein B (184 aa).

The first 19 residues, 1 to 19 (MRFILVLVLILGLVSSSFG), serve as a signal peptide directing secretion. An N-linked (GlcNAc...) asparagine glycan is attached at N129. Positions 164–166 (RGD) match the Cell attachment site motif.

The protein belongs to the Sct family.

Its subcellular location is the secreted. In Dictyostelium discoideum (Social amoeba), this protein is Secreted protein B (29C).